Consider the following 683-residue polypeptide: Inositol-trisphosphate 3-kinase C (683 aa).

A disordered region spans residues 1-124 (MRRCPCRGSL…PDRSSLRTHL (124 aa)). Over residues 13–22 (AEAGALPAAA) the composition is skewed to low complexity. The span at 44–58 (PGAGAPAGRPEGGGP) shows a compositional bias: gly residues. The span at 105-124 (ETERPKQKTEPDRSSLRTHL) shows a compositional bias: basic and acidic residues. A phosphoserine mark is found at serine 127 and serine 162. The interval 147-308 (TDPHRSDLQF…EDGPLEEPEP (162 aa)) is disordered. Residues 196–206 (WTHQNSSSLQT) show a composition bias toward polar residues. Over residues 249–259 (SQKKQDTEAAR) the composition is skewed to basic and acidic residues. Residues 267–289 (FQIQQDTDGSWTQPSTDGSQTAP) show a composition bias toward polar residues. Acidic residues predominate over residues 297-308 (EPEDGPLEEPEP). The Nuclear export signal motif lies at 324–332 (LCPVPRLII). The interval 334-387 (PETPEPEAQPVGPPSRVEGGSGGFSSASSFDESEDDVVAGGGGASDPEDRSGSK) is disordered. Threonine 336 is modified (phosphothreonine). Serine 404 is subject to Phosphoserine. ATP is bound by residues lysine 431, 471–473 (EDL), and aspartate 484. Substrate contacts are provided by residues lysine 486, 507–513 (RKDMYEK), and 534–541 (KPRYMQWR). The segment at 509-517 (DMYEKMVAV) is calmodulin-binding. Residues lysine 558 and aspartate 638 each coordinate ATP. Position 641 (lysine 641) interacts with substrate.

This sequence belongs to the inositol phosphokinase (IPK) family. Highly expressed in pancreas, skeletal muscle, liver, placenta and weakly in kidney and brain.

Its subcellular location is the nucleus. The protein resides in the cytoplasm. The enzyme catalyses 1D-myo-inositol 1,4,5-trisphosphate + ATP = 1D-myo-inositol 1,3,4,5-tetrakisphosphate + ADP + H(+). With respect to regulation, activated by calcium/calmodulin. Inhibited by high concentrations of the substrate Ins(1,2,4)P3, and allosterically activated by the product Ins(1,3,4,5)P4. Its function is as follows. Catalyzes the phosphorylation of 1D-myo-inositol 1,4,5-trisphosphate (InsP3) into 1D-myo-inositol 1,3,4,5-tetrakisphosphate and participates to the regulation of calcium homeostasis. Can phosphorylate inositol 2,4,5-triphosphate to inositol 2,4,5,6-tetraphosphate. In Homo sapiens (Human), this protein is Inositol-trisphosphate 3-kinase C.